Reading from the N-terminus, the 122-residue chain is Large ribosomal subunit protein uL14c (122 aa).

The protein belongs to the universal ribosomal protein uL14 family. In terms of assembly, part of the 50S ribosomal subunit.

It localises to the plastid. In terms of biological role, binds to 23S rRNA. In Euglena longa (Euglenophycean alga), this protein is Large ribosomal subunit protein uL14c.